The following is a 428-amino-acid chain: MNAPLKADDTDLAALMADLATKARAAARVLALAPAEQKNTGLAAMAAALRASAPKLLAANAEDVAEARASGATPAFVDRLALNDARIETMAAGLDVVRGLDDPVGKVTERWTRPNGMTIERVRVPLGVAAVIFESRPNVLADAGALCLKSGNAVILRGGSDSFRSCQAIHACLTQGLREAGLPEAAISLVPTRDRAAVGLLLSGLDGRIDVIVPRGGKSLVARVEAEARVPVFAHLDGNNHVFVDKAASLDMAKTIVLNAKMRRPGICGAAETLLVDKAAAPAQLKPLVGMLIDAGCEVRGDTDVQKADARVTPVTEDDWATEFEAPIIAAKVVGGLDEAIAHIERYGSHHTDAIVTDDATAATRFLNEVDSAIVLHNASTQFADGGEFGFGAEIGIATGKFHARGPVGVEQLTSFKYRVHGTGQTRP.

This sequence belongs to the gamma-glutamyl phosphate reductase family.

The protein resides in the cytoplasm. The catalysed reaction is L-glutamate 5-semialdehyde + phosphate + NADP(+) = L-glutamyl 5-phosphate + NADPH + H(+). It participates in amino-acid biosynthesis; L-proline biosynthesis; L-glutamate 5-semialdehyde from L-glutamate: step 2/2. Functionally, catalyzes the NADPH-dependent reduction of L-glutamate 5-phosphate into L-glutamate 5-semialdehyde and phosphate. The product spontaneously undergoes cyclization to form 1-pyrroline-5-carboxylate. In Afipia carboxidovorans (strain ATCC 49405 / DSM 1227 / KCTC 32145 / OM5) (Oligotropha carboxidovorans), this protein is Gamma-glutamyl phosphate reductase.